A 502-amino-acid polypeptide reads, in one-letter code: UDP-N-acetylmuramoylalanine--D-glutamate ligase (502 aa).

Residue 129-135 (GTNGKTT) participates in ATP binding.

Belongs to the MurCDEF family.

It localises to the cytoplasm. The catalysed reaction is UDP-N-acetyl-alpha-D-muramoyl-L-alanine + D-glutamate + ATP = UDP-N-acetyl-alpha-D-muramoyl-L-alanyl-D-glutamate + ADP + phosphate + H(+). The protein operates within cell wall biogenesis; peptidoglycan biosynthesis. Functionally, cell wall formation. Catalyzes the addition of glutamate to the nucleotide precursor UDP-N-acetylmuramoyl-L-alanine (UMA). This is UDP-N-acetylmuramoylalanine--D-glutamate ligase from Burkholderia ambifaria (strain MC40-6).